The chain runs to 540 residues: Cytochrome P450 monooxygenase ptmG (540 aa).

N17 is a glycosylation site (N-linked (GlcNAc...) asparagine). 2 helical membrane passes run 20–40 (VMTL…YICI) and 325–345 (AAFL…FLLL). C474 contacts heme.

This sequence belongs to the cytochrome P450 family. It depends on heme as a cofactor.

It localises to the membrane. Its pathway is secondary metabolite biosynthesis. Functionally, cytochrome P450 monooxygenase; part of the gene cluster that mediates the biosynthesis of the indole diterpenes penitrems. The geranylgeranyl diphosphate (GGPP) synthase ptmG catalyzes the first step in penitrem biosynthesis via conversion of farnesyl pyrophosphate and isopentyl pyrophosphate into geranylgeranyl pyrophosphate (GGPP). Condensation of indole-3-glycerol phosphate with GGPP by the prenyl transferase ptmC then forms 3-geranylgeranylindole (3-GGI). Epoxidation by the FAD-dependent monooxygenase ptmM leads to a epoxidized-GGI that is substrate of the terpene cyclase ptmB for cyclization to yield paspaline. Paspaline is subsequently converted to 13-desoxypaxilline by the cytochrome P450 monooxygenase ptmP, the latter being then converted to paxilline by the cytochrome P450 monooxygenase ptmQ. Paxilline is converted to beta-paxitriol via C-10 ketoreduction by the short-chain dehydrogenase ptmH which can be monoprenylated at the C-20 by the indole diterpene prenyltransferase ptmD. A two-step elimination (acetylation and elimination) process performed by the O-acetyltransferase ptmV and ptmI leads to the production of the prenylated form of penijanthine. The FAD-linked oxidoreductase ptmO then converts the prenylated form of penijanthine into PC-M5 which is in turn transformed into PC-M4 by the aromatic dimethylallyltransferase ptmE. Five sequential oxidative transformations performed by the cytochrome P450 monooxygenases ptmK, ptmU, ptmL, ptmN and ptmJ yield the various penitrem compounds. PtmK, ptmU and ptmM are involved in the formation of the key bicyclic ring of penitrem C via the formation of the intermediates secopenitrem D and penitrem D. PtmL catalyzes the epoxidation of penitrem D and C to yield penitrem B and F, respectively. PtmJ catalyzes the last benzylic hydroxylation to convert penitrem B to prenitrem E and penitrem F to penitrem A. The protein is Cytochrome P450 monooxygenase ptmG of Penicillium ochrochloron.